A 548-amino-acid polypeptide reads, in one-letter code: Fluconazole resistance protein 1 (548 aa).

Residues 30-94 (SAREDETRKP…WNGPSDPENP (65 aa)) form a disordered region. Residues 31 to 51 (AREDETRKPENTDKKECKPDY) show a composition bias toward basic and acidic residues. Residues 60 to 73 (SCSESSTDSDSSGS) are compositionally biased toward low complexity. 12 helical membrane passes run 104 to 124 (LVVF…SIYT), 139 to 159 (VVAT…PIIF), 179 to 199 (FFFM…GLIV), 203 to 223 (ISGI…ADII), 230 to 250 (LVLG…PLLG), 261 to 281 (FIFW…AFFF), 347 to 367 (IAVA…VFVG), 376 to 396 (VGLA…LFGI), 416 to 436 (FLIV…LFGW), 440 to 460 (VHWI…FNIF), 476 to 496 (ASVF…FPLF), and 511 to 531 (VAWG…IPFI).

This sequence belongs to the major facilitator superfamily.

Its subcellular location is the membrane. Probable efflux transporter. Confers resistance to the azole derivative fluconazole (FCZ). This chain is Fluconazole resistance protein 1 (FLR1), found in Saccharomyces cerevisiae (strain ATCC 204508 / S288c) (Baker's yeast).